The following is a 506-amino-acid chain: Bifunctional purine biosynthesis protein PurH (506 aa).

Positions 1-146 constitute an MGS-like domain; the sequence is MARLALLSVS…KNFAHLTVLC (146 aa).

This sequence belongs to the PurH family.

The catalysed reaction is (6R)-10-formyltetrahydrofolate + 5-amino-1-(5-phospho-beta-D-ribosyl)imidazole-4-carboxamide = 5-formamido-1-(5-phospho-D-ribosyl)imidazole-4-carboxamide + (6S)-5,6,7,8-tetrahydrofolate. It catalyses the reaction IMP + H2O = 5-formamido-1-(5-phospho-D-ribosyl)imidazole-4-carboxamide. It participates in purine metabolism; IMP biosynthesis via de novo pathway; 5-formamido-1-(5-phospho-D-ribosyl)imidazole-4-carboxamide from 5-amino-1-(5-phospho-D-ribosyl)imidazole-4-carboxamide (10-formyl THF route): step 1/1. Its pathway is purine metabolism; IMP biosynthesis via de novo pathway; IMP from 5-formamido-1-(5-phospho-D-ribosyl)imidazole-4-carboxamide: step 1/1. The sequence is that of Bifunctional purine biosynthesis protein PurH from Trichormus variabilis (strain ATCC 29413 / PCC 7937) (Anabaena variabilis).